Here is a 657-residue protein sequence, read N- to C-terminus: Iron-sulfur cluster biogenesis chaperone, mitochondrial (657 aa).

Belongs to the heat shock protein 70 family. In terms of assembly, interacts with the Fe/S cluster assembly proteins ISU1, MGE1, GRX5 and JAC1.

Its subcellular location is the mitochondrion matrix. It catalyses the reaction ATP + H2O = ADP + phosphate + H(+). Required for the assembly of iron-sulfur (Fe/S) clusters in mitochondria. Assisted by the DnaJ-like co-chaperone JAC1 and the nucleotide exchange factor MGE1, it mediates ATP-dependent Fe-S cluster transfer from the scaffold proteins ISU1/ISU2 to GRX5. This Saccharomyces cerevisiae (strain ATCC 204508 / S288c) (Baker's yeast) protein is Iron-sulfur cluster biogenesis chaperone, mitochondrial.